The following is a 470-amino-acid chain: Sugar transporter ERD6-like 8 (470 aa).

Residues 1–16 (METRKDDMEKRNDKSE) are compositionally biased toward basic and acidic residues. The interval 1–24 (METRKDDMEKRNDKSEPLLLPENG) is disordered. 12 consecutive transmembrane segments (helical) span residues 33–53 (WMVYLSTIIAVCGSYEFGTCV), 73–93 (QFSVFGSILNMGAVLGAITSG), 110–130 (VISAIGWLIIYLAKGDVPLDF), 133–153 (FLTGYGCGTLSFVVPVFIAEI), 164–184 (TLNQLFIVIGLASMFLIGAVV), 188–208 (TLALTGVAPCVVLFFGTWFIP), 270–290 (FVIVGVGLMFFQQFVGINGVI), 307–327 (GSILYSIEQVVLTALGATLLI), 335–355 (LLMASAVGMLIGCLLIGNSFL), 373–393 (GVLVYIGSFSIGMGAIPWVIM), 409–429 (VTVVNWLSSWLVSFTFNFLMI), and 434–454 (GTFYVYGGVCVLAIIFIAKLV).

The protein belongs to the major facilitator superfamily. Sugar transporter (TC 2.A.1.1) family.

Its subcellular location is the membrane. Functionally, sugar transporter. The polypeptide is Sugar transporter ERD6-like 8 (Arabidopsis thaliana (Mouse-ear cress)).